A 129-amino-acid polypeptide reads, in one-letter code: uncharacterized protein (129 aa).

Helical transmembrane passes span 4 to 24 (FKFLKCVYLCFMVFVRLILII) and 37 to 57 (VISLLFIILTFLLILGCDLSI).

To B.burgdorferi BBF20.

It localises to the cell membrane. This is an uncharacterized protein from Borreliella burgdorferi (strain ATCC 35210 / DSM 4680 / CIP 102532 / B31) (Borrelia burgdorferi).